A 184-amino-acid chain; its full sequence is Ribosome-recycling factor (184 aa).

Belongs to the RRF family.

The protein localises to the cytoplasm. Functionally, responsible for the release of ribosomes from messenger RNA at the termination of protein biosynthesis. May increase the efficiency of translation by recycling ribosomes from one round of translation to another. The polypeptide is Ribosome-recycling factor (Borrelia recurrentis (strain A1)).